The chain runs to 255 residues: Type III pantothenate kinase (255 aa).

Position 6–13 (6–13 (DIGNTNIK)) interacts with ATP. 107–110 (GADR) is a binding site for substrate. The active-site Proton acceptor is the aspartate 109. Residue threonine 132 participates in ATP binding. A substrate-binding site is contributed by threonine 184.

Belongs to the type III pantothenate kinase family. As to quaternary structure, homodimer. The cofactor is NH4(+). Requires K(+) as cofactor.

It is found in the cytoplasm. The enzyme catalyses (R)-pantothenate + ATP = (R)-4'-phosphopantothenate + ADP + H(+). It functions in the pathway cofactor biosynthesis; coenzyme A biosynthesis; CoA from (R)-pantothenate: step 1/5. Functionally, catalyzes the phosphorylation of pantothenate (Pan), the first step in CoA biosynthesis. The protein is Type III pantothenate kinase of Roseiflexus castenholzii (strain DSM 13941 / HLO8).